A 305-amino-acid chain; its full sequence is UDP-N-acetylenolpyruvoylglucosamine reductase (305 aa).

Residues 33-198 enclose the FAD-binding PCMH-type domain; that stretch reads RVGGPAQVLF…TGGTFRGRRA (166 aa). The active site involves R178. The Proton donor role is filled by S227. E297 is a catalytic residue.

This sequence belongs to the MurB family. It depends on FAD as a cofactor.

The protein resides in the cytoplasm. It catalyses the reaction UDP-N-acetyl-alpha-D-muramate + NADP(+) = UDP-N-acetyl-3-O-(1-carboxyvinyl)-alpha-D-glucosamine + NADPH + H(+). It functions in the pathway cell wall biogenesis; peptidoglycan biosynthesis. Functionally, cell wall formation. This Nitrobacter hamburgensis (strain DSM 10229 / NCIMB 13809 / X14) protein is UDP-N-acetylenolpyruvoylglucosamine reductase.